The following is a 316-amino-acid chain: MNIAHRPVLLAEAVTALVGGPLIQNQNSENHILVIDGTFGRGGHTQALLKELNPSAHMISFDKDLDAIAVAQKINDPRLKIVHDSFAQMDQYAEAESVDGILLDLGISSPQVDEAHRGFSFRREGPLDMRMNTDHGLTAAEWLEQASLEEITHVIKTYGEERFAFQIARAIVAKREDGLPPKTTTQLASLVSSVVRTREAGQDPATRTFQALRIFINRELEDLELGLKAAMKLLKPGARLAVISFHSLEDRIVKQFMQAHAKVDVPRGLPVREKDLPQSALKIISRLKPSDAEVSENPRARSAIMRVAEKRIGAAS.

S-adenosyl-L-methionine-binding positions include 42–44 (GGH), Asp62, Phe86, Asp104, and Gln111.

It belongs to the methyltransferase superfamily. RsmH family.

The protein resides in the cytoplasm. It catalyses the reaction cytidine(1402) in 16S rRNA + S-adenosyl-L-methionine = N(4)-methylcytidine(1402) in 16S rRNA + S-adenosyl-L-homocysteine + H(+). Specifically methylates the N4 position of cytidine in position 1402 (C1402) of 16S rRNA. The sequence is that of Ribosomal RNA small subunit methyltransferase H from Polynucleobacter necessarius subsp. necessarius (strain STIR1).